Here is an 894-residue protein sequence, read N- to C-terminus: Protein SEY1 homolog (894 aa).

Low complexity-rich tracts occupy residues 1 to 10 and 36 to 48; these read MSEEITTNQT and VQEQQEQQQQEQQ. The tract at residues 1–97 is disordered; it reads MSEEITTNQT…QKQQTQEQEH (97 aa). At 1–800 the chain is on the cytoplasmic side; sequence MSEEITTNQT…EQNRLTSGGG (800 aa). Positions 21-60 form a coiled coil; that stretch reads RLSNENIKQEDEEQQVQEQQEQQQQEQQEQIDDQDTQQQE. The segment covering 49 to 65 has biased composition (acidic residues); sequence EQIDDQDTQQQEDEFVV. Positions 78–93 are enriched in low complexity; sequence TPTLQETPQQQKQQTQ. The region spanning 138–361 is the GB1/RHD3-type G domain; the sequence is GFDYSVISIL…ADSFIPKRKY (224 aa). 148 to 155 lines the GTP pocket; sequence GPQSSGKS. Residues 801–821 form a helical membrane-spanning segment; the sequence is VPGYMIILLCVLGFNEFISII. At 822–824 the chain is on the lumenal side; it reads SSP. Residues 825–845 form a helical membrane-spanning segment; sequence LLLLLTILLGGVGFVLFKLGL. At 846–894 the chain is on the cytoplasmic side; sequence AGPFIDYSSQILVHFISKVKDIVLHVEQLQEQNHNNNNNNNNTPKQKRE.

The protein belongs to the TRAFAC class dynamin-like GTPase superfamily. GB1/RHD3 GTPase family. RHD3 subfamily.

It is found in the endoplasmic reticulum membrane. Its function is as follows. Probable GTP-binding protein that may be involved in cell development. This chain is Protein SEY1 homolog, found in Dictyostelium discoideum (Social amoeba).